A 360-amino-acid polypeptide reads, in one-letter code: Protein RecA (360 aa).

69-76 (GPESSGKT) serves as a coordination point for ATP.

Belongs to the RecA family.

The protein resides in the cytoplasm. Its function is as follows. Can catalyze the hydrolysis of ATP in the presence of single-stranded DNA, the ATP-dependent uptake of single-stranded DNA by duplex DNA, and the ATP-dependent hybridization of homologous single-stranded DNAs. It interacts with LexA causing its activation and leading to its autocatalytic cleavage. In Trichodesmium erythraeum (strain IMS101), this protein is Protein RecA.